A 314-amino-acid polypeptide reads, in one-letter code: Acetyl-coenzyme A carboxylase carboxyl transferase subunit beta (314 aa).

The CoA carboxyltransferase N-terminal domain maps to 37 to 307 (LWQKCPACDT…MSLPSIDSEA (271 aa)). Residues Cys41, Cys44, Cys60, and Cys63 each contribute to the Zn(2+) site. Residues 41–63 (CPACDTLTYTKDLQQNWQVCPSC) form a C4-type zinc finger.

The protein belongs to the AccD/PCCB family. In terms of assembly, acetyl-CoA carboxylase is a heterohexamer composed of biotin carboxyl carrier protein (AccB), biotin carboxylase (AccC) and two subunits each of ACCase subunit alpha (AccA) and ACCase subunit beta (AccD). The cofactor is Zn(2+).

Its subcellular location is the cytoplasm. It carries out the reaction N(6)-carboxybiotinyl-L-lysyl-[protein] + acetyl-CoA = N(6)-biotinyl-L-lysyl-[protein] + malonyl-CoA. It participates in lipid metabolism; malonyl-CoA biosynthesis; malonyl-CoA from acetyl-CoA: step 1/1. Functionally, component of the acetyl coenzyme A carboxylase (ACC) complex. Biotin carboxylase (BC) catalyzes the carboxylation of biotin on its carrier protein (BCCP) and then the CO(2) group is transferred by the transcarboxylase to acetyl-CoA to form malonyl-CoA. This chain is Acetyl-coenzyme A carboxylase carboxyl transferase subunit beta, found in Synechococcus sp. (strain JA-2-3B'a(2-13)) (Cyanobacteria bacterium Yellowstone B-Prime).